A 145-amino-acid polypeptide reads, in one-letter code: 3-hydroxyacyl-[acyl-carrier-protein] dehydratase FabZ (145 aa).

Residue H48 is part of the active site.

This sequence belongs to the thioester dehydratase family. FabZ subfamily.

The protein resides in the cytoplasm. It catalyses the reaction a (3R)-hydroxyacyl-[ACP] = a (2E)-enoyl-[ACP] + H2O. Functionally, involved in unsaturated fatty acids biosynthesis. Catalyzes the dehydration of short chain beta-hydroxyacyl-ACPs and long chain saturated and unsaturated beta-hydroxyacyl-ACPs. The polypeptide is 3-hydroxyacyl-[acyl-carrier-protein] dehydratase FabZ (Marinomonas sp. (strain MWYL1)).